The following is a 642-amino-acid chain: Threonine--tRNA ligase (642 aa).

The region spanning 1–61 (MPIITLPDGS…EEDASLEIIT (61 aa)) is the TGS domain. The interval 244–535 (DHRKIGKQLD…LIEEYAGFFP (292 aa)) is catalytic. Zn(2+)-binding residues include cysteine 335, histidine 386, and histidine 512.

This sequence belongs to the class-II aminoacyl-tRNA synthetase family. In terms of assembly, homodimer. Zn(2+) is required as a cofactor.

Its subcellular location is the cytoplasm. It catalyses the reaction tRNA(Thr) + L-threonine + ATP = L-threonyl-tRNA(Thr) + AMP + diphosphate + H(+). Catalyzes the attachment of threonine to tRNA(Thr) in a two-step reaction: L-threonine is first activated by ATP to form Thr-AMP and then transferred to the acceptor end of tRNA(Thr). Also edits incorrectly charged L-seryl-tRNA(Thr). This is Threonine--tRNA ligase from Vibrio parahaemolyticus serotype O3:K6 (strain RIMD 2210633).